The following is a 602-amino-acid chain: Zinc finger MYND domain-containing protein 11 (602 aa).

The SAMD1-like winged helix (WH) domain maps to 6-82 (KRRQADTKAI…CKGSKAGIEQ (77 aa)). The segment at 100-148 (DWYCFECHLPGEVLICDLCFRVYHSKCLSDEFRLRDSSSHWQCPVCRSI) adopts a PHD-type zinc-finger fold. A Bromo domain is found at 149 to 255 (KKKHSNKQEM…KDTCHELDEL (107 aa)). 4 residues coordinate Zn(2+): Cys258, Cys261, Cys277, and His281. The PWWP domain occupies 280–331 (NHELVWAKMKGFGFWPAKVMQKEDNQVDVRFFGHHHQRAWIPSENIQDITVN). Residues 291 to 310 (FGFWPAKVMQKEDNQVDVRF) form an aromatic cage required for H3.3K36me3-specific binding region. A Glycyl lysine isopeptide (Lys-Gly) (interchain with G-Cter in SUMO2) cross-link involves residue Lys366. The disordered stretch occupies residues 366 to 461 (KNEDRGEEEA…HRSTQTTSDG (96 aa)). The Nuclear localization signal signature appears at 394–400 (RAKKGRR). Residues Lys407 and Lys408 each participate in a glycyl lysine isopeptide (Lys-Gly) (interchain with G-Cter in SUMO2) cross-link. Ser421 is subject to Phosphoserine. Polar residues predominate over residues 435-461 (SVSTQTKKLSASSPRMLHRSTQTTSDG). 8 residues coordinate Zn(2+): Cys563, Cys566, Cys574, Cys575, Cys581, Cys585, His594, and Cys598. The MYND-type zinc-finger motif lies at 563 to 598 (CYNCEEEAMYHCCWNTSYCSIKCQQEHWHAEHKRTC).

As to quaternary structure, homooligomer; forms homooligomers via its C-terminus. Interacts with histone H3.3 trimethylated at 'Lys-36' (H3.3K36me3). Interacts (via MYND-type zinc finger) with NCOR1. Interacts (via MYND-type zinc finger) with MGA protein (via PXLXP motif). Interacts (via MYND-type zinc finger) with EZH2. Interacts with EMSY and E2F6. Interacts with PIAS1 and UBE2I. In terms of processing, ubiquitinated, leading to proteasomal degradation. Post-translationally, sumoylated following its interaction with PIAS1 and UBE2I.

The protein resides in the nucleus. It localises to the chromosome. Functionally, chromatin reader that specifically recognizes and binds histone H3.3 trimethylated at 'Lys-36' (H3.3K36me3) and regulates RNA polymerase II elongation. Does not bind other histone H3 subtypes (H3.1 or H3.2). Colocalizes with highly expressed genes and functions as a transcription corepressor by modulating RNA polymerase II at the elongation stage. Binds non-specifically to dsDNA. Acts as a tumor-suppressor by repressing a transcriptional program essential for tumor cell growth. The protein is Zinc finger MYND domain-containing protein 11 (Zmynd11) of Mus musculus (Mouse).